Here is an 88-residue protein sequence, read N- to C-terminus: Secretion system apparatus protein SsaS (88 aa).

Transmembrane regions (helical) follow at residues 15-35 (WIVL…GVIV) and 55-75 (LLAI…ILLN).

It belongs to the FliQ/MopD/SpaQ family.

It localises to the cell membrane. Part of a type III secretion system. The protein is Secretion system apparatus protein SsaS (ssaS) of Salmonella typhimurium (strain LT2 / SGSC1412 / ATCC 700720).